We begin with the raw amino-acid sequence, 274 residues long: Large ribosomal subunit protein uL2 (274 aa).

The segment at 221–274 (RGTAMNPVDHPHGGGEGRNFGKHPVTPWGVQTKGKKTRNNKRTDKSIVRRRSKK) is disordered.

This sequence belongs to the universal ribosomal protein uL2 family. As to quaternary structure, part of the 50S ribosomal subunit. Forms a bridge to the 30S subunit in the 70S ribosome.

Its function is as follows. One of the primary rRNA binding proteins. Required for association of the 30S and 50S subunits to form the 70S ribosome, for tRNA binding and peptide bond formation. It has been suggested to have peptidyltransferase activity; this is somewhat controversial. Makes several contacts with the 16S rRNA in the 70S ribosome. This is Large ribosomal subunit protein uL2 from Hamiltonella defensa subsp. Acyrthosiphon pisum (strain 5AT).